The primary structure comprises 401 residues: MTERVVLAYSGGLDTSVCIGWITEQTGAEVIAVAVDVGQGEDMEVIRKRALACGAVEAEVIDARAEFAADYCVPALRANALYMGRYPLISALSRPLIDKHLVAAAHRHKATAVAHGSTGKGNDQVRFEVGIGSLDPELRILAPVRDSGMTRDRAIAFAEAKGLPIEVTKKSPYSIDANLWGRAIETGFLEDIWNAPIEEIYAYTADPAVPRPADEVVVSFSDGVPVAIDGRPVSPLEAITELNRRAGAQGVGRIDLVEDRLVGIKSREVYEAPGAVALITAHQELENVTVERDLARFKRLVDQRWAELVYDGLWFSPLKRALDAFIDTAQRHVTGDIRLVLHGGRAVVTGRRSPQALYDYRLATYDTGDLFDQSLAKGFVELWGLPSRTAARRDLAAGAGE.

8 to 16 (AYSGGLDTS) contributes to the ATP binding site. Tyrosine 86 provides a ligand contact to L-citrulline. An ATP-binding site is contributed by glycine 116. Residues threonine 118, asparagine 122, and aspartate 123 each coordinate L-aspartate. Position 122 (asparagine 122) interacts with L-citrulline. L-citrulline-binding residues include arginine 126, serine 174, glutamate 258, and tyrosine 270.

This sequence belongs to the argininosuccinate synthase family. Type 1 subfamily. Homotetramer.

Its subcellular location is the cytoplasm. The enzyme catalyses L-citrulline + L-aspartate + ATP = 2-(N(omega)-L-arginino)succinate + AMP + diphosphate + H(+). It participates in amino-acid biosynthesis; L-arginine biosynthesis; L-arginine from L-ornithine and carbamoyl phosphate: step 2/3. The polypeptide is Argininosuccinate synthase (Acidothermus cellulolyticus (strain ATCC 43068 / DSM 8971 / 11B)).